A 179-amino-acid polypeptide reads, in one-letter code: Sec-independent protein translocase protein TatB (179 aa).

The chain crosses the membrane as a helical span at residues 2–22 (FNGVGWGEVVVLLLIGLFVFG). Over residues 98–109 (LLGDDPPAAPSL) the composition is skewed to low complexity. Positions 98–179 (LLGDDPPAAP…TEVPFDSDAT (82 aa)) are disordered.

It belongs to the TatB family. As to quaternary structure, the Tat system comprises two distinct complexes: a TatABC complex, containing multiple copies of TatA, TatB and TatC subunits, and a separate TatA complex, containing only TatA subunits. Substrates initially bind to the TatABC complex, which probably triggers association of the separate TatA complex to form the active translocon.

It localises to the cell membrane. Its function is as follows. Part of the twin-arginine translocation (Tat) system that transports large folded proteins containing a characteristic twin-arginine motif in their signal peptide across membranes. Together with TatC, TatB is part of a receptor directly interacting with Tat signal peptides. TatB may form an oligomeric binding site that transiently accommodates folded Tat precursor proteins before their translocation. This is Sec-independent protein translocase protein TatB from Frankia casuarinae (strain DSM 45818 / CECT 9043 / HFP020203 / CcI3).